The chain runs to 535 residues: Keratin, type II cytoskeletal 79 (535 aa).

Composition is skewed to polar residues over residues 1–12 and 28–38; these read MRSSVSRQTYST and QARTSFSSVTV. Positions 1–53 are disordered; sequence MRSSVSRQTYSTKGAFSSSSASGGGGSQARTSFSSVTVSRNSGRGGGPRCGPS. The tract at residues 1–141 is head; it reads MRSSVSRQTY…DPEIQRVRTE (141 aa). The segment covering 43–53 has biased composition (gly residues); that stretch reads GRGGGPRCGPS. Positions 142 to 177 are coil 1A; sequence EREQIKTLNNKFASFIDKVRFLEQQNKVLETKWALL. In terms of domain architecture, IF rod spans 142-457; that stretch reads EREQIKTLNN…KLLESEESRM (316 aa). Residues 178–198 form a linker 1 region; it reads QEQGQKSGVTRNNLEPLFEHF. A coil 1B region spans residues 199–290; sequence INNLRGKLDN…HLYEEELSQV (92 aa). Positions 291–314 are linker 12; that stretch reads QTHVSDTSVILSMDNNRNLDLDSI. The coil 2 stretch occupies residues 315–453; sequence IAEVKAQYEQ…ATYRKLLESE (139 aa). A tail region spans residues 454-535; it reads ESRMSGECPS…TTVKTSSRRY (82 aa).

This sequence belongs to the intermediate filament family. In terms of assembly, heterotetramer of two type I and two type II keratins.

The polypeptide is Keratin, type II cytoskeletal 79 (KRT79) (Bos taurus (Bovine)).